A 493-amino-acid chain; its full sequence is Probable UTP--glucose-1-phosphate uridylyltransferase (493 aa).

Residues 105 to 108 (LTGK), Gln-181, Gly-211, and Asp-242 each bind UTP. 107-108 (GK) provides a ligand contact to substrate. Position 240-242 (240-242 (NVD)) interacts with substrate.

This sequence belongs to the UDPGP type 1 family.

It catalyses the reaction alpha-D-glucose 1-phosphate + UTP + H(+) = UDP-alpha-D-glucose + diphosphate. Its function is as follows. Plays a central role as a glucosyl donor in cellular metabolic pathways. In Saccharomyces cerevisiae (strain ATCC 204508 / S288c) (Baker's yeast), this protein is Probable UTP--glucose-1-phosphate uridylyltransferase.